A 305-amino-acid chain; its full sequence is Putative ABC transporter molybdenum-binding protein HVO_B0369 (305 aa).

The tat-type signal signal peptide spans 1-40 (MNPDSAAGRSSRRAFLAAVGGVAAGGLTATAGCLGRGEEA).

This sequence belongs to the bacterial solute-binding protein 1 family. WtpA subfamily. As to quaternary structure, the complex is composed of two ATP-binding proteins, two transmembrane proteins (HVO_B0370) and a solute-binding protein (HVO_B0369). Predicted to be exported by the Tat system. The position of the signal peptide cleavage has not been experimentally proven.

Its function is as follows. Part of an ABC transporter complex involved in molybdenum import. This Haloferax volcanii (strain ATCC 29605 / DSM 3757 / JCM 8879 / NBRC 14742 / NCIMB 2012 / VKM B-1768 / DS2) (Halobacterium volcanii) protein is Putative ABC transporter molybdenum-binding protein HVO_B0369.